A 345-amino-acid chain; its full sequence is Anthranilate phosphoribosyltransferase (345 aa).

Residues glycine 86, 89-90, threonine 94, 96-99, 114-122, and alanine 126 each bind 5-phospho-alpha-D-ribose 1-diphosphate; these read GD, NIST, and KHGNRNLSS. Glycine 86 provides a ligand contact to anthranilate. Serine 98 serves as a coordination point for Mg(2+). Asparagine 117 is a binding site for anthranilate. Arginine 172 is an anthranilate binding site. Mg(2+) contacts are provided by aspartate 231 and glutamate 232.

Belongs to the anthranilate phosphoribosyltransferase family. Homodimer. Requires Mg(2+) as cofactor.

The catalysed reaction is N-(5-phospho-beta-D-ribosyl)anthranilate + diphosphate = 5-phospho-alpha-D-ribose 1-diphosphate + anthranilate. It functions in the pathway amino-acid biosynthesis; L-tryptophan biosynthesis; L-tryptophan from chorismate: step 2/5. In terms of biological role, catalyzes the transfer of the phosphoribosyl group of 5-phosphorylribose-1-pyrophosphate (PRPP) to anthranilate to yield N-(5'-phosphoribosyl)-anthranilate (PRA). The protein is Anthranilate phosphoribosyltransferase of Jannaschia sp. (strain CCS1).